The primary structure comprises 134 residues: Small ribosomal subunit protein uS11 (134 aa).

This sequence belongs to the universal ribosomal protein uS11 family. As to quaternary structure, component of the small ribosomal subunit.

The protein localises to the cytoplasm. The chain is Small ribosomal subunit protein uS11 (RPS14) from Encephalitozoon cuniculi (strain GB-M1) (Microsporidian parasite).